A 513-amino-acid chain; its full sequence is Alpha,alpha-trehalose-phosphate synthase [UDP-forming] (513 aa).

Residue Y40 is modified to Phosphotyrosine. Positions 104 and 158 each coordinate D-glucose 6-phosphate. 2 residues coordinate UDP: R294 and K299. Positions 294 and 299 each coordinate UDP-alpha-D-glucose. R332 serves as a coordination point for D-glucose 6-phosphate. Residue 393–401 (DGMNLVSYE) coordinates UDP-alpha-D-glucose. 397–401 (LVSYE) serves as a coordination point for UDP. S503 carries the phosphoserine modification.

The protein belongs to the glycosyltransferase 20 family. In terms of assembly, homomer. Component of the trehalose synthase complex that contains at least tps1, ntp1 and tpp1. Interacts with tpp1. Interacts with ntp1; the interaction is independent of stress conditions.

The protein resides in the cytoplasm. Its subcellular location is the nucleus. The enzyme catalyses D-glucose 6-phosphate + UDP-alpha-D-glucose = alpha,alpha-trehalose 6-phosphate + UDP + H(+). Its pathway is carbohydrate biosynthesis. Synthase catalytic subunit of the trehalose synthase complex that catalyzes the production of trehalose from glucose-6-phosphate and UDP-alpha-D-glucose in a two step process. The disaccharide trehalose serves as a storage carbohydrate that is mobilized during nutrient stress and spore germination. Together with ntp1, regulates the level of trehalose as a protectant for cell integrity during thermal and osmotic stress. This is Alpha,alpha-trehalose-phosphate synthase [UDP-forming] from Schizosaccharomyces pombe (strain 972 / ATCC 24843) (Fission yeast).